The chain runs to 201 residues: Adenylyl-sulfate kinase (201 aa).

35–42 contributes to the ATP binding site; sequence GLSGSGKS. Ser-109 serves as the catalytic Phosphoserine intermediate.

This sequence belongs to the APS kinase family.

The catalysed reaction is adenosine 5'-phosphosulfate + ATP = 3'-phosphoadenylyl sulfate + ADP + H(+). It functions in the pathway sulfur metabolism; hydrogen sulfide biosynthesis; sulfite from sulfate: step 2/3. Catalyzes the synthesis of activated sulfate. The protein is Adenylyl-sulfate kinase of Salmonella gallinarum (strain 287/91 / NCTC 13346).